A 1028-amino-acid polypeptide reads, in one-letter code: Pentatricopeptide repeat-containing protein At3g09040, mitochondrial (1028 aa).

A mitochondrion-targeting transit peptide spans methionine 1–glycine 30. PPR repeat units lie at residues glutamate 94 to lysine 123, aspartate 124 to proline 158, asparagine 159 to arginine 193, asparagine 194 to proline 224, asparagine 225 to proline 259, aspartate 260 to proline 290, aspartate 291 to serine 325, threonine 326 to serine 360, asparagine 361 to lysine 391, asparagine 392 to isoleucine 426, aspartate 427 to lysine 461, asparagine 462 to arginine 492, aspartate 493 to serine 527, aspartate 528 to arginine 562, aspartate 563 to tryptophan 593, serine 594 to proline 627, serine 628 to serine 662, glycine 664 to proline 694, serine 696 to proline 730, aspartate 731 to leucine 765, aspartate 766 to arginine 796, asparagine 798 to proline 832, aspartate 833 to glutamine 863, and arginine 869 to lysine 899. The interval leucine 904–glutamate 979 is type E motif. Positions glutamine 980–lysine 1010 are type E(+) motif.

It belongs to the PPR family. PCMP-E subfamily.

It is found in the mitochondrion. This is Pentatricopeptide repeat-containing protein At3g09040, mitochondrial (PCMP-E88) from Arabidopsis thaliana (Mouse-ear cress).